The primary structure comprises 82 residues: Exodeoxyribonuclease 7 small subunit (82 aa).

The protein belongs to the XseB family. As to quaternary structure, heterooligomer composed of large and small subunits.

The protein localises to the cytoplasm. It carries out the reaction Exonucleolytic cleavage in either 5'- to 3'- or 3'- to 5'-direction to yield nucleoside 5'-phosphates.. Its function is as follows. Bidirectionally degrades single-stranded DNA into large acid-insoluble oligonucleotides, which are then degraded further into small acid-soluble oligonucleotides. In Mannheimia succiniciproducens (strain KCTC 0769BP / MBEL55E), this protein is Exodeoxyribonuclease 7 small subunit.